Consider the following 278-residue polypeptide: DNA repair protein RecO (278 aa).

Polar residues predominate over residues 1 to 12 (MGTNDALTSTED). The interval 1 to 42 (MGTNDALTSTEDAVTAGANDAPLPAPPEPPRKARRATSRTSD) is disordered.

The protein belongs to the RecO family.

In terms of biological role, involved in DNA repair and RecF pathway recombination. The chain is DNA repair protein RecO from Burkholderia lata (strain ATCC 17760 / DSM 23089 / LMG 22485 / NCIMB 9086 / R18194 / 383).